Reading from the N-terminus, the 657-residue chain is Tetracycline resistance protein TetQ (657 aa).

The tr-type G domain maps to Met-17–Glu-260. GTP contacts are provided by residues Ala-26–Thr-33, Asp-90–His-94, and Asn-144–Asp-147.

Belongs to the TRAFAC class translation factor GTPase superfamily. Classic translation factor GTPase family. TetM/TetO subfamily.

Its function is as follows. Abolishes the inhibitory effect of tetracycline on protein synthesis by non-covalently modifying ribosomes. Confers mild resistance to tetracycline when expressed in E.coli. This is Tetracycline resistance protein TetQ (tetQ) from Bacteroides fragilis.